Reading from the N-terminus, the 273-residue chain is Large ribosomal subunit protein uL2 (273 aa).

Positions 228-273 are disordered; that stretch reads VDHPHGGGEGKTSGGRHPVTPWGFPTKGKKTRKNKRTSKFIVKKRK. Residues 254 to 273 show a composition bias toward basic residues; the sequence is KGKKTRKNKRTSKFIVKKRK.

The protein belongs to the universal ribosomal protein uL2 family. In terms of assembly, part of the 50S ribosomal subunit. Forms a bridge to the 30S subunit in the 70S ribosome.

Its function is as follows. One of the primary rRNA binding proteins. Required for association of the 30S and 50S subunits to form the 70S ribosome, for tRNA binding and peptide bond formation. It has been suggested to have peptidyltransferase activity; this is somewhat controversial. Makes several contacts with the 16S rRNA in the 70S ribosome. The chain is Large ribosomal subunit protein uL2 from Rickettsia africae (strain ESF-5).